A 78-amino-acid chain; its full sequence is Esculentin-2PLa (78 aa).

A signal peptide spans 1 to 22; the sequence is MFTTKKSMLLLFFLGTISLSLC. A propeptide spanning residues 23 to 39 is cleaved from the precursor; sequence EEERGADEEEGDGEKLM. Cys-72 and Cys-78 are joined by a disulfide.

Expressed by the skin glands.

The protein resides in the secreted. Functionally, antimicrobial activity against the Gram-negative bacterium E.coli, the Gram-positive bacterium S.aureus and the yeast C.albicans. The sequence is that of Esculentin-2PLa from Lithobates palustris (Pickerel frog).